The following is a 444-amino-acid chain: Elongation factor 1-alpha (444 aa).

In terms of domain architecture, tr-type G spans 15-236 (KPHINLAVVG…VLDTFQPPPR (222 aa)). The interval 24 to 31 (GHVDNGKS) is G1. 24–31 (GHVDNGKS) is a GTP binding site. Serine 31 is a Mg(2+) binding site. Residues 80 to 84 (GVTIE) form a G2 region. The segment at 101–104 (DLPG) is G3. GTP contacts are provided by residues 101–105 (DLPGH) and 163–166 (NKMD). The tract at residues 163-166 (NKMD) is G4. Residues 202–204 (SAI) form a G5 region.

This sequence belongs to the TRAFAC class translation factor GTPase superfamily. Classic translation factor GTPase family. EF-Tu/EF-1A subfamily.

The protein localises to the cytoplasm. It carries out the reaction GTP + H2O = GDP + phosphate + H(+). Its function is as follows. GTP hydrolase that promotes the GTP-dependent binding of aminoacyl-tRNA to the A-site of ribosomes during protein biosynthesis. The chain is Elongation factor 1-alpha from Pyrobaculum calidifontis (strain DSM 21063 / JCM 11548 / VA1).